The sequence spans 179 residues: Large ribosomal subunit protein uL5 (179 aa).

Belongs to the universal ribosomal protein uL5 family. In terms of assembly, part of the 50S ribosomal subunit; part of the 5S rRNA/L5/L18/L25 subcomplex. Contacts the 5S rRNA and the P site tRNA. Forms a bridge to the 30S subunit in the 70S ribosome.

Its function is as follows. This is one of the proteins that bind and probably mediate the attachment of the 5S RNA into the large ribosomal subunit, where it forms part of the central protuberance. In the 70S ribosome it contacts protein S13 of the 30S subunit (bridge B1b), connecting the 2 subunits; this bridge is implicated in subunit movement. Contacts the P site tRNA; the 5S rRNA and some of its associated proteins might help stabilize positioning of ribosome-bound tRNAs. This is Large ribosomal subunit protein uL5 from Desulfosudis oleivorans (strain DSM 6200 / JCM 39069 / Hxd3) (Desulfococcus oleovorans).